A 306-amino-acid chain; its full sequence is Myb family transcription factor MOF1 (306 aa).

Residues 19 to 79 form the HTH myb-type domain; it reads RSKVPRLRWT…HLQMYRCSRL (61 aa). Positions 50–75 form a DNA-binding region, H-T-H motif; it reads PKLILQLMGVKGLTISHVKSHLQMYR.

In terms of assembly, interacts with TPR1, TPR2 and TPR3. Expressed in roots, leaves, leaf sheaths, culms, panicles, lemmas, paleas, lodicules, stamens, and pistils.

It localises to the nucleus. Transcriptional repressor that plays a role in the regulation of organ identity and spikelet meristem determinacy. Interacts with the TPR corepressors to possibly repress the expression of downstream target genes. The protein is Myb family transcription factor MOF1 of Oryza sativa subsp. japonica (Rice).